The chain runs to 377 residues: uncharacterized protein (377 aa).

Transmembrane regions (helical) follow at residues 4-24, 41-61, 85-105, 134-154, 159-179, 192-212, 278-298, 301-321, 327-347, and 356-376; these read LLTP…LLGT, ASFG…FPIT, IAAL…FLFG, FHAM…IATV, VYVH…PFLL, GAVG…IALA, VFGI…AGFV, GVGY…DLVV, IASV…AIGL, and LCFF…PVLK.

To R.meliloti MosC.

Its subcellular location is the cell membrane. In terms of biological role, could be involved in a transport system. This is an uncharacterized protein from Sinorhizobium fredii (strain NBRC 101917 / NGR234).